Reading from the N-terminus, the 287-residue chain is Agamous-like MADS-box protein AGL53 (287 aa).

The 49-residue stretch at S30 to D78 folds into the MADS-box domain. Residues E151–L171 are disordered.

Interacts with MEE14/CBP1.

Its subcellular location is the nucleus. Probable transcription factor that may function in the maintenance of the proper function of the central cell in pollen tube attraction. The polypeptide is Agamous-like MADS-box protein AGL53 (Arabidopsis thaliana (Mouse-ear cress)).